We begin with the raw amino-acid sequence, 307 residues long: Malate dehydrogenase (307 aa).

NAD(+)-binding positions include G8–G13 and D32. Substrate-binding residues include R81 and R87. NAD(+) is bound by residues N94 and V117 to N119. Residues N119 and R150 each contribute to the substrate site. Residue H174 is the Proton acceptor of the active site.

Belongs to the LDH/MDH superfamily. MDH type 3 family.

It carries out the reaction (S)-malate + NAD(+) = oxaloacetate + NADH + H(+). Functionally, catalyzes the reversible oxidation of malate to oxaloacetate. This Dehalococcoides mccartyi (strain ATCC BAA-2266 / KCTC 15142 / 195) (Dehalococcoides ethenogenes (strain 195)) protein is Malate dehydrogenase.